Here is a 243-residue protein sequence, read N- to C-terminus: F-box protein pof15 (243 aa).

Residues 28 to 73 (QTSSTLLPVEVIDSVMQYLPAHDVIQSSFASYPLTLIANKIIRARL) form the F-box domain.

It participates in protein modification; protein ubiquitination. Probable substrate recognition component of a SCF (SKP1-CUL1-F-box protein) E3 ubiquitin-protein ligase complex that mediates the ubiquitination and subsequent proteasomal degradation of target proteins. The protein is F-box protein pof15 (pof15) of Schizosaccharomyces pombe (strain 972 / ATCC 24843) (Fission yeast).